The primary structure comprises 520 residues: 6-phosphofructo-2-kinase/fructose-2,6-bisphosphatase 3 (520 aa).

The tract at residues 1–245 (MPLELTQSRV…VYYLMNIHVQ (245 aa)) is 6-phosphofructo-2-kinase. Residue 42 to 50 (GLPARGKTY) participates in ATP binding. Residues R75 and R99 each coordinate beta-D-fructose 6-phosphate. D125 is an active-site residue. Residues T127 and R133 each contribute to the beta-D-fructose 6-phosphate site. The active site involves C155. 164–169 (NIMEVK) lines the ATP pocket. Beta-D-fructose 6-phosphate is bound by residues K169, R190, and Y194. Residues 246–520 (PRTIYLCRHG…RSSADSSRKH (275 aa)) form a fructose-2,6-bisphosphatase region. R253 contributes to the beta-D-fructose 2,6-bisphosphate binding site. The Tele-phosphohistidine intermediate role is filled by H254. Beta-D-fructose 2,6-bisphosphate is bound by residues N260 and G266. The Proton donor/acceptor role is filled by E323. Residues Y334, R348, K352, Y363, Q389, and R393 each contribute to the beta-D-fructose 2,6-bisphosphate site. 345–348 (YALR) serves as a coordination point for ATP. ATP is bound by residues 389-393 (QAVLR) and Y425. Residues 443-520 (RERSEDAKKG…RSSADSSRKH (78 aa)) are disordered. Residue S461 is modified to Phosphoserine; by AMPK. At T463 the chain carries Phosphothreonine. S467 carries the phosphoserine modification. The residue at position 471 (T471) is a Phosphothreonine; by PKC. Over residues 502–520 (LPGQNMKGSRSSADSSRKH) the composition is skewed to polar residues.

This sequence in the C-terminal section; belongs to the phosphoglycerate mutase family. As to quaternary structure, homodimer. Forms a heterodimer with PFKFB2. Phosphorylation by AMPK stimulates activity. In terms of tissue distribution, ubiquitous.

It carries out the reaction beta-D-fructose 2,6-bisphosphate + H2O = beta-D-fructose 6-phosphate + phosphate. It catalyses the reaction beta-D-fructose 6-phosphate + ATP = beta-D-fructose 2,6-bisphosphate + ADP + H(+). Functionally, catalyzes both the synthesis and degradation of fructose 2,6-bisphosphate. This Homo sapiens (Human) protein is 6-phosphofructo-2-kinase/fructose-2,6-bisphosphatase 3 (PFKFB3).